Consider the following 291-residue polypeptide: Succinate--CoA ligase [ADP-forming] subunit alpha 1 (291 aa).

Residues 20 to 23, Lys-46, and 99 to 101 contribute to the CoA site; these read TGFQ and VTE. Tyr-162 contributes to the substrate binding site. The Tele-phosphohistidine intermediate role is filled by His-249.

Belongs to the succinate/malate CoA ligase alpha subunit family. In terms of assembly, heterotetramer of two alpha and two beta subunits.

It carries out the reaction succinate + ATP + CoA = succinyl-CoA + ADP + phosphate. It catalyses the reaction GTP + succinate + CoA = succinyl-CoA + GDP + phosphate. It participates in carbohydrate metabolism; tricarboxylic acid cycle; succinate from succinyl-CoA (ligase route): step 1/1. In terms of biological role, succinyl-CoA synthetase functions in the citric acid cycle (TCA), coupling the hydrolysis of succinyl-CoA to the synthesis of either ATP or GTP and thus represents the only step of substrate-level phosphorylation in the TCA. The alpha subunit of the enzyme binds the substrates coenzyme A and phosphate, while succinate binding and nucleotide specificity is provided by the beta subunit. This Archaeoglobus fulgidus (strain ATCC 49558 / DSM 4304 / JCM 9628 / NBRC 100126 / VC-16) protein is Succinate--CoA ligase [ADP-forming] subunit alpha 1.